We begin with the raw amino-acid sequence, 480 residues long: MRRSDRFPCAGASLLVVLCGVFPSSFGGRTLPGLSDDIPFRLKWPGPDFTLPTAGIPYKEENYIIMTTADQETYKCMLPLMANGNEEEDREYKGPSPGELLDPLFKLSSCSYRIESYWTYEVCHGKYIRQYHEEKEAGQKLNIQEYYLGKTVKKSPSEAGENQEDKERTEGHKDIHTKNIEGQMTPYYPVEMTNGTPCSLKQNQARSSTVMYICHPEAKHEILSVAEITTCEYEVVILTPLLCNHPKYKFRPSPINDIFCQSMPGSPLRPQSLEKLEHQQEEIKSPLKAKEEEQQLLKEKFSTIHKPVTVGSQQQVTVGTTHISRLTDEQLIKEFLSGSYCFHGGVGWWKYEFCYGKYVHQYHEDKDTGKTTVVVGTWKAEEHLDWAKKNLAKAYMSTADGVQTVKTVSHFYGGGDLCEVNEQPRQVVVKLKCKQSESPHAVTVYMLEPQTCQYILGVESPVICKILDTADENGLLSIPN.

The signal sequence occupies residues 1 to 27; that stretch reads MRRSDRFPCAGASLLVVLCGVFPSSFG. 2 consecutive MRH domains span residues 108 to 245 and 339 to 466; these read SSCS…LCNH and SYCF…ICKI. Cys110 and Cys123 are disulfide-bonded. The segment at 152 to 172 is disordered; that stretch reads VKKSPSEAGENQEDKERTEGH. The segment covering 163–172 has biased composition (basic and acidic residues); that stretch reads QEDKERTEGH. Cystine bridges form between Cys198/Cys231, Cys214/Cys243, Cys341/Cys354, Cys418/Cys452, and Cys433/Cys464.

It is found in the endoplasmic reticulum lumen. Its function is as follows. Probable lectin that binds selectively to improperly folded lumenal proteins. May function in endoplasmic reticulum quality control and endoplasmic reticulum-associated degradation (ERAD) of both non-glycosylated proteins and glycoproteins. The polypeptide is Endoplasmic reticulum lectin 1 (erlec1) (Xenopus laevis (African clawed frog)).